The following is a 298-amino-acid chain: Diphthine methyl ester synthase (298 aa).

S-adenosyl-L-methionine contacts are provided by residues leucine 9, aspartate 85, glycine 88, serine 113–valine 114, leucine 164, leucine 222, and histidine 247.

It belongs to the diphthine synthase family.

Its subcellular location is the cytoplasm. The enzyme catalyses 2-[(3S)-amino-3-carboxypropyl]-L-histidyl-[translation elongation factor 2] + 4 S-adenosyl-L-methionine = diphthine methyl ester-[translation elongation factor 2] + 4 S-adenosyl-L-homocysteine + 3 H(+). It participates in protein modification; peptidyl-diphthamide biosynthesis. In terms of biological role, S-adenosyl-L-methionine-dependent methyltransferase that catalyzes four methylations of the modified target histidine residue in translation elongation factor 2 (EF-2), to form an intermediate called diphthine methyl ester. The four successive methylation reactions represent the second step of diphthamide biosynthesis. This chain is Diphthine methyl ester synthase (DPH5), found in Eremothecium gossypii (strain ATCC 10895 / CBS 109.51 / FGSC 9923 / NRRL Y-1056) (Yeast).